The following is a 230-amino-acid chain: 5'-methylthioadenosine/S-adenosylhomocysteine nucleosidase (230 aa).

Glu12 (proton acceptor) is an active-site residue. Residues Gly78, Ile153, and 174 to 175 each bind substrate; that span reads ME. Catalysis depends on Asp198, which acts as the Proton donor.

This sequence belongs to the PNP/UDP phosphorylase family. MtnN subfamily.

It carries out the reaction S-adenosyl-L-homocysteine + H2O = S-(5-deoxy-D-ribos-5-yl)-L-homocysteine + adenine. It catalyses the reaction S-methyl-5'-thioadenosine + H2O = 5-(methylsulfanyl)-D-ribose + adenine. The enzyme catalyses 5'-deoxyadenosine + H2O = 5-deoxy-D-ribose + adenine. Its pathway is amino-acid biosynthesis; L-methionine biosynthesis via salvage pathway; S-methyl-5-thio-alpha-D-ribose 1-phosphate from S-methyl-5'-thioadenosine (hydrolase route): step 1/2. Its function is as follows. Catalyzes the irreversible cleavage of the glycosidic bond in both 5'-methylthioadenosine (MTA) and S-adenosylhomocysteine (SAH/AdoHcy) to adenine and the corresponding thioribose, 5'-methylthioribose and S-ribosylhomocysteine, respectively. Also cleaves 5'-deoxyadenosine, a toxic by-product of radical S-adenosylmethionine (SAM) enzymes, into 5-deoxyribose and adenine. This Shewanella denitrificans (strain OS217 / ATCC BAA-1090 / DSM 15013) protein is 5'-methylthioadenosine/S-adenosylhomocysteine nucleosidase.